We begin with the raw amino-acid sequence, 315 residues long: Calcium homeostasis modulator protein 6 (315 aa).

Over 1-21 the chain is Cytoplasmic; it reads MEKFKAVLDLQIKHRSALGYG. The helical transmembrane segment at 22–37 threads the bilayer; sequence LVTLLTAGGEKIFSTV. Topologically, residues 38-46 are extracellular; the sequence is VFQCPCTAT. Cystine bridges form between Cys-41–Cys-127, Cys-43–Cys-156, and Cys-140–Cys-147. A helical membrane pass occupies residues 47–68; it reads LNLTYGLVFLLVPALALFLLGY. Residues 69–103 lie on the Cytoplasmic side of the membrane; the sequence is ALSARTWRLLTGCCSRSASTRSSSGLRSTLVCAQV. Residues 104 to 128 traverse the membrane as a helical segment; the sequence is SAVAALAPLTWVAVALLGGSFYQCA. Residues 129–169 lie on the Extracellular side of the membrane; that stretch reads VSGSTRLASYLCKDRNHSCIAKLPQVPCNKQEAEMQEILSQ. A helical membrane pass occupies residues 170–192; it reads LKAQSQVLGWVLIAAVIFLLLVF. The Cytoplasmic segment spans residues 193 to 315; the sequence is KCVSRCFSPV…DAAMANTHGV (123 aa).

Belongs to the CALHM family. As to quaternary structure, oligomerizes to form decameric and undecameric channels.

It is found in the cell membrane. The enzyme catalyses ATP(in) = ATP(out). Functionally, pore-forming subunit of an ATP-permeable channel. In response to pathogen-derived and proinflammatory stimuli, relocates from intracellular compartments to NK-dendritic cell and NK-macrophage immune synapses where it mediates ATP efflux and NK cell activation involved in antimicrobial and antitumor responses. May assemble to form gap junction channel-like structures with gating and ion conductance likely regulated by membrane lipids and voltage rather than by extracellular calcium levels. This Rattus norvegicus (Rat) protein is Calcium homeostasis modulator protein 6.